The chain runs to 1369 residues: DNA-directed RNA polymerase subunit beta' (1369 aa).

The tract at residues 1–26 is disordered; it reads MTSSSPKTRKSSTKSKAKRGSKSKKA. Residues 7–24 are compositionally biased toward basic residues; it reads KTRKSSTKSKAKRGSKSK. Zn(2+) contacts are provided by C253, C320, C327, and C330. Residues 1294–1369 form a disordered region; sequence TVDMPSSPVA…LQEEGLLSDE (76 aa). Residues 1342–1351 are compositionally biased toward acidic residues; that stretch reads DDELSAEDQM. Over residues 1357–1369 the composition is skewed to low complexity; it reads LEGLQEEGLLSDE.

The protein belongs to the RNA polymerase beta' chain family. RpoC2 subfamily. In terms of assembly, in cyanobacteria the RNAP catalytic core is composed of 2 alpha, 1 beta, 1 beta', 1 gamma and 1 omega subunit. When a sigma factor is associated with the core the holoenzyme is formed, which can initiate transcription. Zn(2+) is required as a cofactor.

It carries out the reaction RNA(n) + a ribonucleoside 5'-triphosphate = RNA(n+1) + diphosphate. Its function is as follows. DNA-dependent RNA polymerase catalyzes the transcription of DNA into RNA using the four ribonucleoside triphosphates as substrates. The sequence is that of DNA-directed RNA polymerase subunit beta' from Prochlorococcus marinus (strain NATL2A).